The chain runs to 467 residues: Putative laccase-16 (467 aa).

Plastocyanin-like domains are found at residues 7–88 (VLGS…PKHG), 98–225 (KEIP…YTDS), and 318–451 (DFPN…KDGK). His-22, His-24, His-67, and His-69 together coordinate Cu cation. Cu cation is bound by residues His-368, His-371, His-373, His-430, Cys-431, His-432, His-436, and Met-441.

Belongs to the multicopper oxidase family. It depends on Cu cation as a cofactor.

The protein localises to the secreted. It is found in the extracellular space. The protein resides in the apoplast. It catalyses the reaction 4 hydroquinone + O2 = 4 benzosemiquinone + 2 H2O. In terms of biological role, lignin degradation and detoxification of lignin-derived products. This is Putative laccase-16 (LAC16) from Oryza sativa subsp. japonica (Rice).